Reading from the N-terminus, the 245-residue chain is Ribonuclease 3 (245 aa).

The region spanning 18–146 is the RNase III domain; the sequence is LSKFLENLSI…FVGAIYLDSG (129 aa). Mg(2+) is bound at residue Glu-59. Residue Asp-63 is part of the active site. Residues Asp-132 and Glu-135 each contribute to the Mg(2+) site. Glu-135 is an active-site residue. Residues 173 to 242 form the DRBM domain; that stretch reads DYKSLLQEYV…AEVALKAMEN (70 aa).

The protein belongs to the ribonuclease III family. Homodimer. Requires Mg(2+) as cofactor.

The protein localises to the cytoplasm. The catalysed reaction is Endonucleolytic cleavage to 5'-phosphomonoester.. In terms of biological role, digests double-stranded RNA. Involved in the processing of primary rRNA transcript to yield the immediate precursors to the large and small rRNAs (23S and 16S). Processes some mRNAs, and tRNAs when they are encoded in the rRNA operon. Processes pre-crRNA and tracrRNA of type II CRISPR loci if present in the organism. This is Ribonuclease 3 from Borreliella burgdorferi (strain ATCC 35210 / DSM 4680 / CIP 102532 / B31) (Borrelia burgdorferi).